The following is a 646-amino-acid chain: FAD-binding monooxygenase prhK (646 aa).

A glycan (N-linked (GlcNAc...) asparagine) is linked at Asn-46. Residues Ile-80 to Ile-97 form a helical membrane-spanning segment. Residues Thr-119–Trp-122, Asp-131–Thr-132, and Tyr-137 contribute to the FAD site. Residue Met-129–Asp-131 coordinates NADP(+). Residues Thr-275 to Gln-281 and Arg-298 to Thr-299 contribute to the NADP(+) site. Asn-429, Asn-483, and Asn-529 each carry an N-linked (GlcNAc...) asparagine glycan.

The protein belongs to the FAD-binding monooxygenase family. FAD serves as cofactor.

The protein resides in the membrane. It catalyses the reaction preaustinoid A + AH2 + O2 = preaustinoid A1 + A + H2O. It functions in the pathway secondary metabolite biosynthesis; terpenoid biosynthesis. FAD-binding monooxygenase; part of the gene cluster that mediates the biosynthesis of paraherquonin, a meroterpenoid with a unique, highly congested hexacyclic molecular architecture. The first step of the pathway is the synthesis of 3,5-dimethylorsellinic acid (DMOA) by the polyketide synthase prhL. Synthesis of DMOA is followed by farnesylation by the prenyltransferase prhE, methylesterification by the methyl-transferase prhM, epoxidation of the prenyl chain by the flavin-dependent monooxygenase prhF, and cyclization of the farnesyl moiety by the terpene cyclase prhH, to yield the tetracyclic intermediate, protoaustinoid A. The short chain dehydrogenase prhI then oxidizes the C-3 alcohol group of the terpene cyclase product to transform protoaustinoid A into protoaustinoid B. The FAD-binding monooxygenase prhJ catalyzes the oxidation of protoaustinoid B into preaustinoid A which is further oxidized into preaustinoid A1 by FAD-binding monooxygenase phrK. Finally, prhA leads to berkeleydione via the berkeleyone B intermediate. PrhA is a multifunctional dioxygenase that first desaturates at C5-C6 to form berkeleyone B, followed by rearrangement of the A/B-ring to form the cycloheptadiene moiety in berkeleydione. Berkeleydione serves as the key intermediate for the biosynthesis of paraherquonin as well as many other meroterpenoids. The cytochrome P450 monooxygenases prhB, prhD, and prhN, as well as the isomerase prhC, are probably involved in the late stage of paraherquonin biosynthesis, after the production of berkeleydione. Especially prhC might be a multifunctional enzyme that catalyzes the D-ring expansion via intramolecular methoxy rearrangement, as well as the hydrolysis of the expanded D-ring. This chain is FAD-binding monooxygenase prhK, found in Penicillium brasilianum.